The primary structure comprises 238 residues: Ribonuclease HII (238 aa).

The RNase H type-2 domain maps to 23 to 215 (QRLCGVDEAG…VREALARLPM (193 aa)). A divalent metal cation contacts are provided by D29, E30, and D124.

This sequence belongs to the RNase HII family. Mn(2+) serves as cofactor. The cofactor is Mg(2+).

It is found in the cytoplasm. The catalysed reaction is Endonucleolytic cleavage to 5'-phosphomonoester.. Its function is as follows. Endonuclease that specifically degrades the RNA of RNA-DNA hybrids. The protein is Ribonuclease HII of Cupriavidus necator (strain ATCC 17699 / DSM 428 / KCTC 22496 / NCIMB 10442 / H16 / Stanier 337) (Ralstonia eutropha).